A 245-amino-acid chain; its full sequence is Biosynthetic peptidoglycan transglycosylase (245 aa).

The chain crosses the membrane as a helical span at residues leucine 24 to phenylalanine 44.

This sequence belongs to the glycosyltransferase 51 family.

Its subcellular location is the cell inner membrane. The catalysed reaction is [GlcNAc-(1-&gt;4)-Mur2Ac(oyl-L-Ala-gamma-D-Glu-L-Lys-D-Ala-D-Ala)](n)-di-trans,octa-cis-undecaprenyl diphosphate + beta-D-GlcNAc-(1-&gt;4)-Mur2Ac(oyl-L-Ala-gamma-D-Glu-L-Lys-D-Ala-D-Ala)-di-trans,octa-cis-undecaprenyl diphosphate = [GlcNAc-(1-&gt;4)-Mur2Ac(oyl-L-Ala-gamma-D-Glu-L-Lys-D-Ala-D-Ala)](n+1)-di-trans,octa-cis-undecaprenyl diphosphate + di-trans,octa-cis-undecaprenyl diphosphate + H(+). It functions in the pathway cell wall biogenesis; peptidoglycan biosynthesis. In terms of biological role, peptidoglycan polymerase that catalyzes glycan chain elongation from lipid-linked precursors. In Pectobacterium atrosepticum (strain SCRI 1043 / ATCC BAA-672) (Erwinia carotovora subsp. atroseptica), this protein is Biosynthetic peptidoglycan transglycosylase.